Consider the following 222-residue polypeptide: Pyridoxine/pyridoxamine 5'-phosphate oxidase (222 aa).

Substrate contacts are provided by residues Arg16–Tyr19 and Lys75. Residues Arg70–Lys75, Phe85–Thr86, Lys92, and Gln114 contribute to the FMN site. Tyr132, Arg136, and Ser140 together coordinate substrate. FMN is bound by residues Gln149–Ser150 and Trp195. Arg201–His203 provides a ligand contact to substrate. Arg205 lines the FMN pocket.

This sequence belongs to the pyridoxamine 5'-phosphate oxidase family. Homodimer. The cofactor is FMN.

The catalysed reaction is pyridoxamine 5'-phosphate + O2 + H2O = pyridoxal 5'-phosphate + H2O2 + NH4(+). The enzyme catalyses pyridoxine 5'-phosphate + O2 = pyridoxal 5'-phosphate + H2O2. It participates in cofactor metabolism; pyridoxal 5'-phosphate salvage; pyridoxal 5'-phosphate from pyridoxamine 5'-phosphate: step 1/1. The protein operates within cofactor metabolism; pyridoxal 5'-phosphate salvage; pyridoxal 5'-phosphate from pyridoxine 5'-phosphate: step 1/1. Functionally, catalyzes the oxidation of either pyridoxine 5'-phosphate (PNP) or pyridoxamine 5'-phosphate (PMP) into pyridoxal 5'-phosphate (PLP). The chain is Pyridoxine/pyridoxamine 5'-phosphate oxidase from Saccharopolyspora erythraea (strain ATCC 11635 / DSM 40517 / JCM 4748 / NBRC 13426 / NCIMB 8594 / NRRL 2338).